The sequence spans 120 residues: Transcription elongation factor SPT4 (120 aa).

The tract at residues 1–39 (MAASIPSDLRNLRACLLCSLIKSVDAFQTDGCENCDEVL) is interaction with spt-5. Residues 15–35 (CLLCSLIKSVDAFQTDGCENC) form a C4-type zinc finger.

This sequence belongs to the SPT4 family. As to quaternary structure, interacts with spt-5 to form DSIF. DSIF interacts with RNA polymerase II and with the positive transcription elongation factor b complex (P-TEFb complex), which is composed of cdk-9 and cyclin-T.

The protein localises to the nucleus. May function as a component of the DRB sensitivity-inducing factor complex (DSIF complex), which regulates transcription elongation by RNA polymerase II. DSIF may enhance transcriptional pausing at sites proximal to the promoter, which may in turn facilitate the assembly of an elongation competent RNA polymerase II complex. The chain is Transcription elongation factor SPT4 (spt-4) from Caenorhabditis briggsae.